The following is a 229-amino-acid chain: NAD(P)H-hydrate epimerase (229 aa).

Residues A9 to L216 form the YjeF N-terminal domain. N59–D63 is a (6S)-NADPHX binding site. K(+)-binding residues include N60 and D124. (6S)-NADPHX-binding positions include G128–P134 and D157. S160 serves as a coordination point for K(+).

It belongs to the NnrE/AIBP family. K(+) is required as a cofactor.

It carries out the reaction (6R)-NADHX = (6S)-NADHX. The enzyme catalyses (6R)-NADPHX = (6S)-NADPHX. Its function is as follows. Catalyzes the epimerization of the S- and R-forms of NAD(P)HX, a damaged form of NAD(P)H that is a result of enzymatic or heat-dependent hydration. This is a prerequisite for the S-specific NAD(P)H-hydrate dehydratase to allow the repair of both epimers of NAD(P)HX. The sequence is that of NAD(P)H-hydrate epimerase from Anopheles gambiae (African malaria mosquito).